The primary structure comprises 324 residues: Serpentine receptor class gamma-10 (324 aa).

8 helical membrane passes run 39–59, 69–89, 91–111, 128–146, 155–175, 206–226, 246–266, and 279–299; these read SSYL…VFHG, MLYC…VIFG, IFIY…TPSI, TFSQ…IFLM, ILKP…WKIL, LFHF…TILG, MIMA…VFFA, and IVSF…IVMS.

The protein belongs to the nematode receptor-like protein srg family.

Its subcellular location is the membrane. The sequence is that of Serpentine receptor class gamma-10 (srg-10) from Caenorhabditis elegans.